Consider the following 407-residue polypeptide: O-methyltransferase verK (407 aa).

S-adenosyl-L-methionine contacts are provided by residues E263 and 295-297; that span reads GDF. H314 acts as the Proton acceptor in catalysis.

It belongs to the class I-like SAM-binding methyltransferase superfamily. Cation-independent O-methyltransferase family.

It functions in the pathway mycotoxin biosynthesis. In terms of biological role, O-methyltransferase; part of the gene cluster that mediates the biosynthesis of 11'-deoxyverticillin A, one of the dimeric epipolythiodioxopiperazines (ETPs) from the verticillin family that act as mycotoxins. 11'-deoxyverticillin A is required for normal conidiation. The nonribosomal peptide synthetase verP is speculated to be responsible for condensation of amino acids to form the carbon skeleton of verticillin, whereas the cluster-specific tailoring enzymes are involved in further modifications leading to the production of 11'-deoxyverticillin A. The sequence is that of O-methyltransferase verK from Clonostachys rogersoniana.